We begin with the raw amino-acid sequence, 262 residues long: 5'-nucleotidase SurE (262 aa).

Residues Asp-8, Asp-9, Ser-41, and Asn-97 each coordinate a divalent metal cation.

The protein belongs to the SurE nucleotidase family. A divalent metal cation serves as cofactor.

It localises to the cytoplasm. It catalyses the reaction a ribonucleoside 5'-phosphate + H2O = a ribonucleoside + phosphate. Its function is as follows. Nucleotidase that shows phosphatase activity on nucleoside 5'-monophosphates. The protein is 5'-nucleotidase SurE of Methanococcus maripaludis (strain DSM 14266 / JCM 13030 / NBRC 101832 / S2 / LL).